A 2896-amino-acid chain; its full sequence is 3'-5' exoribonuclease HELZ2 (2896 aa).

2 consecutive C3H1-type zinc fingers follow at residues 90 to 114 and 217 to 246; these read VCHY…RSRE and GQPP…HSAV. The C2H2-type; atypical zinc finger occupies 287 to 311; sequence LYCPACLVTCHSQEAFENHCASSEH. Residues 327–357 form a C3H1-type 3 zinc finger; that stretch reads SPPPGLSKFELCPKPDLCEYGDACTKAHSAQ. The UvrD-like helicase ATP-binding domain maps to 770-1126; sequence VALIAGWGPG…VVLSTVHTCQ (357 aa). 791 to 798 lines the ATP pocket; it reads GPFGTGKT. The tract at residues 810–1306 is interaction with THRAP3; it reads RRPETKVLIC…ESTEAEDAEA (497 aa). Positions 914-917 match the DEAA box motif; the sequence is DEAA. Ser1253 is modified (phosphoserine). 3 short sequence motifs (LXXLL motif) span residues 1322–1326, 1365–1369, and 1420–1424; these read LRELL, LRKLL, and LVQLL. The RNB domain occupies 1581 to 1938; sequence REDCRAFLTF…VLQRQILLAL (358 aa). The short motif at 2259–2263 is the LXXLL motif 4 element; sequence LEGLP. The segment at 2382-2896 is interaction with THRAP3; sequence PSRFLERQTY…RVCRRPTMPS (515 aa). Positions 2400–2675 constitute a UvrD-like helicase ATP-binding 2 domain; that stretch reads LNPSQNVAVR…HMLDTQYRMH (276 aa). 2421-2428 provides a ligand contact to ATP; the sequence is GPPGTGKT. The LXXLL motif 5 motif lies at 2476 to 2480; the sequence is LAGLL.

This sequence belongs to the DNA2/NAM7 helicase family. In terms of assembly, interacts with PPARA (via DNA-binding domain) and PPARG; the interaction stimulates the transcriptional activity of PPARA and PPARG. Interacts with THRAP3; the interaction is direct and HELZ2 and THRAP3 synergistically enhance the transcriptional activity of PPARG. It is probably part of the peroxisome proliferator activated receptor alpha interacting complex (PRIC). In terms of tissue distribution, expressed in various tissues including heart, pancreas, skeletal muscle, colon, spleen, liver, kidney, lung, peripheral blood and placenta.

Its subcellular location is the cytoplasm. It carries out the reaction Exonucleolytic cleavage in the 3'- to 5'-direction to yield nucleoside 5'-phosphates.. The catalysed reaction is ATP + H2O = ADP + phosphate + H(+). Its function is as follows. Can degrade highly structured RNAs through its concerted ATP-dependent RNA helicase and 3' to 5' exoribonuclease activities. Shows a strong preference for pyrimidine over purine residues for its nuclease activity. Acts as a transcriptional coactivator for a number of nuclear receptors including PPARA, PPARG, THRA, THRB and RXRA. In Homo sapiens (Human), this protein is 3'-5' exoribonuclease HELZ2.